A 412-amino-acid polypeptide reads, in one-letter code: Flap endonuclease 1-B (412 aa).

The N-domain stretch occupies residues 1–105 (MGIKGLTKLL…KELAKRSLKR (105 aa)). Asp-34 lines the Mg(2+) pocket. Position 71 (Arg-71) interacts with DNA. Residues Asp-87, Glu-159, Glu-161, Asp-180, and Asp-182 each contribute to the Mg(2+) site. An I-domain region spans residues 123-254 (LIEKFSKRTV…QRALKLIRQH (132 aa)). Residue Glu-159 coordinates DNA. DNA contacts are provided by Gly-232 and Asp-234. Asp-234 contributes to the Mg(2+) binding site.

Belongs to the XPG/RAD2 endonuclease family. FEN1 subfamily. As to quaternary structure, interacts with PCNA. Three molecules of FEN1 bind to one PCNA trimer with each molecule binding to one PCNA monomer. PCNA stimulates the nuclease activity without altering cleavage specificity. It depends on Mg(2+) as a cofactor. Post-translationally, phosphorylated. Phosphorylation upon DNA damage induces relocalization to the nuclear plasma.

It localises to the nucleus. It is found in the nucleolus. The protein localises to the nucleoplasm. The protein resides in the mitochondrion. Functionally, structure-specific nuclease with 5'-flap endonuclease and 5'-3' exonuclease activities involved in DNA replication and repair. During DNA replication, cleaves the 5'-overhanging flap structure that is generated by displacement synthesis when DNA polymerase encounters the 5'-end of a downstream Okazaki fragment. It enters the flap from the 5'-end and then tracks to cleave the flap base, leaving a nick for ligation. Also involved in the long patch base excision repair (LP-BER) pathway, by cleaving within the apurinic/apyrimidinic (AP) site-terminated flap. Acts as a genome stabilization factor that prevents flaps from equilibrating into structures that lead to duplications and deletions. Also possesses 5'-3' exonuclease activity on nicked or gapped double-stranded DNA, and exhibits RNase H activity. Also involved in replication and repair of rDNA and in repairing mitochondrial DNA. This Oryza sativa subsp. indica (Rice) protein is Flap endonuclease 1-B.